Reading from the N-terminus, the 122-residue chain is MARLAGVDIPREKRVIIALTYIYGVGKTRAEETLAATGIDPNIRVKDLSAEQLVQLRDHIEGSYKVEGDLRREVAADIRRKVEIGSYEGLRHRRGLPVRGQRTKTNARTRKGPKKTVAGKKK.

The segment at 93–122 is disordered; sequence RRGLPVRGQRTKTNARTRKGPKKTVAGKKK.

This sequence belongs to the universal ribosomal protein uS13 family. In terms of assembly, part of the 30S ribosomal subunit. Forms a loose heterodimer with protein S19. Forms two bridges to the 50S subunit in the 70S ribosome.

Located at the top of the head of the 30S subunit, it contacts several helices of the 16S rRNA. In the 70S ribosome it contacts the 23S rRNA (bridge B1a) and protein L5 of the 50S subunit (bridge B1b), connecting the 2 subunits; these bridges are implicated in subunit movement. Contacts the tRNAs in the A and P-sites. The sequence is that of Small ribosomal subunit protein uS13 from Micrococcus luteus (strain ATCC 4698 / DSM 20030 / JCM 1464 / CCM 169 / CCUG 5858 / IAM 1056 / NBRC 3333 / NCIMB 9278 / NCTC 2665 / VKM Ac-2230) (Micrococcus lysodeikticus).